The chain runs to 139 residues: Large-conductance mechanosensitive channel (139 aa).

Transmembrane regions (helical) follow at residues 9-29 and 79-99; these read AFAV…GAAF and IQSV…VKAI.

It belongs to the MscL family. In terms of assembly, homopentamer.

The protein resides in the cell inner membrane. Functionally, channel that opens in response to stretch forces in the membrane lipid bilayer. May participate in the regulation of osmotic pressure changes within the cell. In Pseudomonas fluorescens (strain SBW25), this protein is Large-conductance mechanosensitive channel.